A 161-amino-acid polypeptide reads, in one-letter code: 6,7-dimethyl-8-ribityllumazine synthase (161 aa).

5-amino-6-(D-ribitylamino)uracil-binding positions include W31, S63 to E65, and V85 to I87. Residue G90–T91 participates in (2S)-2-hydroxy-3-oxobutyl phosphate binding. The active-site Proton donor is H93. F118 provides a ligand contact to 5-amino-6-(D-ribitylamino)uracil. Residue R132 coordinates (2S)-2-hydroxy-3-oxobutyl phosphate.

This sequence belongs to the DMRL synthase family.

It catalyses the reaction (2S)-2-hydroxy-3-oxobutyl phosphate + 5-amino-6-(D-ribitylamino)uracil = 6,7-dimethyl-8-(1-D-ribityl)lumazine + phosphate + 2 H2O + H(+). It functions in the pathway cofactor biosynthesis; riboflavin biosynthesis; riboflavin from 2-hydroxy-3-oxobutyl phosphate and 5-amino-6-(D-ribitylamino)uracil: step 1/2. Functionally, catalyzes the formation of 6,7-dimethyl-8-ribityllumazine by condensation of 5-amino-6-(D-ribitylamino)uracil with 3,4-dihydroxy-2-butanone 4-phosphate. This is the penultimate step in the biosynthesis of riboflavin. The chain is 6,7-dimethyl-8-ribityllumazine synthase from Paenarthrobacter aurescens (strain TC1).